Reading from the N-terminus, the 210-residue chain is Outer-membrane lipoprotein LolB (210 aa).

A signal peptide spans 1-19 (MNHLKSFFTALVAGFILTA). The N-palmitoyl cysteine moiety is linked to residue Cys20. Cys20 carries S-diacylglycerol cysteine lipidation.

Belongs to the LolB family. Monomer.

Its subcellular location is the cell outer membrane. Its function is as follows. Plays a critical role in the incorporation of lipoproteins in the outer membrane after they are released by the LolA protein. This is Outer-membrane lipoprotein LolB from Mannheimia succiniciproducens (strain KCTC 0769BP / MBEL55E).